Here is a 258-residue protein sequence, read N- to C-terminus: Ureidoacrylate amidohydrolase RutB (258 aa).

Positions 1-23 (MDRPTTYPMDQPAGFRDAQGRHG) are disordered. Aspartate 47 serves as the catalytic Proton acceptor. Lysine 156 is an active-site residue. The active-site Nucleophile is the cysteine 189.

The protein belongs to the isochorismatase family. RutB subfamily.

The catalysed reaction is (Z)-3-ureidoacrylate + H2O + H(+) = (Z)-3-aminoacrylate + NH4(+) + CO2. It catalyses the reaction (Z)-3-ureidoacrylate + H2O = (Z)-3-aminoacrylate + carbamate + H(+). The enzyme catalyses (Z)-2-methylureidoacrylate + H2O + H(+) = (Z)-2-methylaminoacrylate + NH4(+) + CO2. In terms of biological role, hydrolyzes ureidoacrylate to form aminoacrylate and carbamate. The carbamate hydrolyzes spontaneously, thereby releasing one of the nitrogen atoms of the pyrimidine ring as ammonia and one of its carbon atoms as CO2. The polypeptide is Ureidoacrylate amidohydrolase RutB (Methylobacterium radiotolerans (strain ATCC 27329 / DSM 1819 / JCM 2831 / NBRC 15690 / NCIMB 10815 / 0-1)).